We begin with the raw amino-acid sequence, 197 residues long: Short chain dehydrogenase ausX (197 aa).

Residues isoleucine 49, aspartate 95, arginine 157, and tyrosine 189 each contribute to the NADP(+) site. Tyrosine 189 serves as the catalytic Proton acceptor. The Proton donor role is filled by tyrosine 189.

The protein belongs to the short-chain dehydrogenases/reductases (SDR) family.

It functions in the pathway secondary metabolite biosynthesis; terpenoid biosynthesis. Its function is as follows. Short chain dehydrogenase; part of the gene cluster A that mediates the biosynthesis of austinol and dehydroaustinol, two fungal meroterpenoids. The first step of the pathway is the synthesis of 3,5-dimethylorsellinic acid by the polyketide synthase ausA. 3,5-dimethylorsellinic acid is then prenylated by the polyprenyl transferase ausN. Further epoxidation by the FAD-dependent monooxygenase ausM and cyclization by the probable terpene cyclase ausL lead to the formation of protoaustinoid A. Protoaustinoid A is then oxidized to spiro-lactone preaustinoid A3 by the combined action of the FAD-binding monooxygenases ausB and ausC, and the dioxygenase ausE. Acid-catalyzed keto-rearrangement and ring contraction of the tetraketide portion of preaustinoid A3 by ausJ lead to the formation of preaustinoid A4. The aldo-keto reductase ausK, with the help of ausH, is involved in the next step by transforming preaustinoid A4 into isoaustinone which is in turn hydroxylated by the P450 monooxygenase ausI to form austinolide. Finally, the cytochrome P450 monooxygenase ausG modifies austinolide to austinol. Austinol can be further modified to dehydroaustinol which forms a diffusible complex with diorcinol that initiates conidiation. Due to genetic rearrangements of the clusters and the subsequent loss of some enzymes, the end products of the Emericella nidulans austinoid biosynthesis clusters are austinol and dehydroaustinol, even if additional enzymes, such as the O-acetyltransferase ausQ and the cytochrome P450 monooxygenase ausR are still functional. The sequence is that of Short chain dehydrogenase ausX from Emericella nidulans (strain FGSC A4 / ATCC 38163 / CBS 112.46 / NRRL 194 / M139) (Aspergillus nidulans).